We begin with the raw amino-acid sequence, 1103 residues long: Retinal guanylyl cyclase 1 (1103 aa).

An N-terminal signal peptide occupies residues 1–51 (MTACARRAGGLPDPGLCGPAWWAPSLPRLPRALPRLPLLLLLLLLQPPALS). Residues 52 to 462 (AVFTVGVLGP…PNNICGGGLE (411 aa)) are Extracellular-facing. Residue N297 is glycosylated (N-linked (GlcNAc...) asparagine). The helical transmembrane segment at 463-487 (PGLVFLGFLLVVGMGLAGAFLAHYV) threads the bilayer. Topologically, residues 488 to 1103 (RHRLLHMQMV…LEKARPGQFS (616 aa)) are cytoplasmic. One can recognise a Protein kinase domain in the interval 525-808 (QGSRSSLGAR…DHTFDLFKNI (284 aa)). The Guanylate cyclase domain maps to 880–1010 (TLYFSDIVGF…DTVNTASRME (131 aa)). Residues 1065 to 1103 (PIPKPPDLQPGSSNHGISLQEIPPERRRKLEKARPGQFS) are disordered.

Belongs to the adenylyl cyclase class-4/guanylyl cyclase family. As to quaternary structure, homodimer; requires homodimerization for guanylyl cyclase activity. Interacts with RD3; promotes the exit of GUCY2D from the endoplasmic reticulum and its trafficking to the photoreceptor outer segments. Interaction with RD3 negatively regulates guanylate cyclase activity. In terms of tissue distribution, retina.

The protein resides in the photoreceptor outer segment membrane. It is found in the endoplasmic reticulum membrane. The catalysed reaction is GTP = 3',5'-cyclic GMP + diphosphate. Activated by GUCA1A when free calcium ions concentration is low, and inhibited by GUCA1A when free calcium ions concentration is high. Negatively regulated by RD3; inhibits the basal and GUCA1A-stimulated guanylate cyclase activity. Functionally, catalyzes the synthesis of cyclic GMP (cGMP) in rods and cones of photoreceptors. Plays an essential role in phototransduction, by mediating cGMP replenishment. May also participate in the trafficking of membrane-asociated proteins to the photoreceptor outer segment membrane. The chain is Retinal guanylyl cyclase 1 (GUCY2D) from Homo sapiens (Human).